A 200-amino-acid polypeptide reads, in one-letter code: Holliday junction branch migration complex subunit RuvA (200 aa).

A domain I region spans residues 1–64 (MITSIQGTLV…EDSQTLYGFA (64 aa)). A domain II region spans residues 65–144 (SPAERDFFRL…ATGAAPGLAT (80 aa)). The flexible linker stretch occupies residues 145 to 151 (QPAAAAS). A domain III region spans residues 152–200 (PGASAHRDAVAALVALGYRSADADEAVRRASLALGEAATTESLIKKALS).

It belongs to the RuvA family. As to quaternary structure, homotetramer. Forms an RuvA(8)-RuvB(12)-Holliday junction (HJ) complex. HJ DNA is sandwiched between 2 RuvA tetramers; dsDNA enters through RuvA and exits via RuvB. An RuvB hexamer assembles on each DNA strand where it exits the tetramer. Each RuvB hexamer is contacted by two RuvA subunits (via domain III) on 2 adjacent RuvB subunits; this complex drives branch migration. In the full resolvosome a probable DNA-RuvA(4)-RuvB(12)-RuvC(2) complex forms which resolves the HJ.

It localises to the cytoplasm. The RuvA-RuvB-RuvC complex processes Holliday junction (HJ) DNA during genetic recombination and DNA repair, while the RuvA-RuvB complex plays an important role in the rescue of blocked DNA replication forks via replication fork reversal (RFR). RuvA specifically binds to HJ cruciform DNA, conferring on it an open structure. The RuvB hexamer acts as an ATP-dependent pump, pulling dsDNA into and through the RuvAB complex. HJ branch migration allows RuvC to scan DNA until it finds its consensus sequence, where it cleaves and resolves the cruciform DNA. The sequence is that of Holliday junction branch migration complex subunit RuvA from Opitutus terrae (strain DSM 11246 / JCM 15787 / PB90-1).